A 641-amino-acid chain; its full sequence is Probable potassium transport system protein Kup 4 (641 aa).

12 helical membrane passes run 31 to 51, 64 to 84, 119 to 139, 155 to 175, 183 to 203, 221 to 241, 265 to 285, 298 to 318, 355 to 375, 381 to 401, 412 to 432, and 437 to 457; these read AALG…LYTL, TASA…TISI, ILAV…VITP, GSLK…FFAA, IGAA…VLGL, AIGF…GVFL, WYAI…ALLI, LCPT…TIIA, IYVP…TIAF, LAGA…CLLF, LAVS…FFGA, and IAEG…LMLT.

It belongs to the HAK/KUP transporter (TC 2.A.72) family.

It is found in the cell inner membrane. The enzyme catalyses K(+)(in) + H(+)(in) = K(+)(out) + H(+)(out). In terms of biological role, transport of potassium into the cell. Likely operates as a K(+):H(+) symporter. The sequence is that of Probable potassium transport system protein Kup 4 from Bradyrhizobium sp. (strain BTAi1 / ATCC BAA-1182).